We begin with the raw amino-acid sequence, 250 residues long: Global transcriptional regulator CodY (250 aa).

The interval 1–146 (MTLLEKTRKL…GATVVGLEIL (146 aa)) is GAF domain. Residues 194–213 (ASKIADKVGITRSVIVNALR) constitute a DNA-binding region (H-T-H motif).

The protein belongs to the CodY family.

The protein localises to the cytoplasm. In terms of biological role, DNA-binding global transcriptional regulator which is involved in the adaptive response to starvation and acts by directly or indirectly controlling the expression of numerous genes in response to nutrient availability. During rapid exponential growth, CodY is highly active and represses genes whose products allow adaptation to nutrient depletion. The polypeptide is Global transcriptional regulator CodY (Caldanaerobacter subterraneus subsp. tengcongensis (strain DSM 15242 / JCM 11007 / NBRC 100824 / MB4) (Thermoanaerobacter tengcongensis)).